We begin with the raw amino-acid sequence, 182 residues long: Ribosome maturation factor RimM (182 aa).

The PRC barrel domain maps to 101–182 (VDEYYWSDLK…RIYVNWGVDY (82 aa)).

This sequence belongs to the RimM family. In terms of assembly, binds ribosomal protein uS19.

The protein resides in the cytoplasm. In terms of biological role, an accessory protein needed during the final step in the assembly of 30S ribosomal subunit, possibly for assembly of the head region. Essential for efficient processing of 16S rRNA. May be needed both before and after RbfA during the maturation of 16S rRNA. It has affinity for free ribosomal 30S subunits but not for 70S ribosomes. The sequence is that of Ribosome maturation factor RimM from Acinetobacter baylyi (strain ATCC 33305 / BD413 / ADP1).